The following is a 390-amino-acid chain: Probable tRNA sulfurtransferase (390 aa).

One can recognise a THUMP domain in the interval 58–161 (EAVARRLQRV…DEGAYIYSRI (104 aa)). Residues 179 to 180 (LI), 204 to 205 (HF), arginine 261, glycine 283, and glutamine 292 contribute to the ATP site.

The protein belongs to the ThiI family.

The protein resides in the cytoplasm. It carries out the reaction [ThiI sulfur-carrier protein]-S-sulfanyl-L-cysteine + a uridine in tRNA + 2 reduced [2Fe-2S]-[ferredoxin] + ATP + H(+) = [ThiI sulfur-carrier protein]-L-cysteine + a 4-thiouridine in tRNA + 2 oxidized [2Fe-2S]-[ferredoxin] + AMP + diphosphate. The enzyme catalyses [ThiS sulfur-carrier protein]-C-terminal Gly-Gly-AMP + S-sulfanyl-L-cysteinyl-[cysteine desulfurase] + AH2 = [ThiS sulfur-carrier protein]-C-terminal-Gly-aminoethanethioate + L-cysteinyl-[cysteine desulfurase] + A + AMP + 2 H(+). It functions in the pathway cofactor biosynthesis; thiamine diphosphate biosynthesis. Its function is as follows. Catalyzes the ATP-dependent transfer of a sulfur to tRNA to produce 4-thiouridine in position 8 of tRNAs, which functions as a near-UV photosensor. Also catalyzes the transfer of sulfur to the sulfur carrier protein ThiS, forming ThiS-thiocarboxylate. This is a step in the synthesis of thiazole, in the thiamine biosynthesis pathway. The sulfur is donated as persulfide by IscS. In Moorella thermoacetica (strain ATCC 39073 / JCM 9320), this protein is Probable tRNA sulfurtransferase.